Reading from the N-terminus, the 148-residue chain is NPC intracellular cholesterol transporter 2 homolog a (148 aa).

The first 16 residues, 1–16 (MLRYAVIACAALVVFA), serve as a signal peptide directing secretion. 3 cysteine pairs are disulfide-bonded: Cys-24-Cys-140, Cys-39-Cys-46, and Cys-92-Cys-99. Residue Asn-51 is glycosylated (N-linked (GlcNAc...) asparagine).

The protein belongs to the NPC2 family. Broadly expressed with a higher level of expression in many tissues, including midgut, salivary gland and ventral nerve cord.

Its subcellular location is the secreted. In terms of biological role, functions redundantly with Npc2b in regulating sterol homeostasis and ecdysteroid biosynthesis, probably by controlling the availability of sterol substrate. This is NPC intracellular cholesterol transporter 2 homolog a from Drosophila melanogaster (Fruit fly).